We begin with the raw amino-acid sequence, 251 residues long: Putative glutamine amidotransferase YLR126C (251 aa).

One can recognise a Glutamine amidotransferase type-1 domain in the interval 48–232 (EVFHVQKNVF…NRYERQCQEL (185 aa)). Residues Cys112, His198, and Glu200 each act as for GATase activity in the active site.

It localises to the cytoplasm. Its function is as follows. May have a role in copper and iron homeostasis. In Saccharomyces cerevisiae (strain ATCC 204508 / S288c) (Baker's yeast), this protein is Putative glutamine amidotransferase YLR126C.